A 281-amino-acid polypeptide reads, in one-letter code: Large ribosomal subunit protein uL2 (281 aa).

The interval 222-281 (TVRGSVMNPNDHPHGGGEGRTPIGRKSPVTPWGKKALGVKTRNTKKPSEKLIVRKRNAKK) is disordered.

Belongs to the universal ribosomal protein uL2 family. Part of the 50S ribosomal subunit. Forms a bridge to the 30S subunit in the 70S ribosome.

Its function is as follows. One of the primary rRNA binding proteins. Required for association of the 30S and 50S subunits to form the 70S ribosome, for tRNA binding and peptide bond formation. It has been suggested to have peptidyltransferase activity; this is somewhat controversial. Makes several contacts with the 16S rRNA in the 70S ribosome. This chain is Large ribosomal subunit protein uL2, found in Mesoplasma florum (strain ATCC 33453 / NBRC 100688 / NCTC 11704 / L1) (Acholeplasma florum).